Consider the following 147-residue polypeptide: Cytochrome c-type biogenesis protein CcmE (147 aa).

Residues 1-9 (MKNLKKQRR) are Cytoplasmic-facing. The helical; Signal-anchor for type II membrane protein transmembrane segment at 10–30 (IQVIALATVALVLSTALIGYA) threads the bilayer. The Periplasmic segment spans residues 31 to 147 (MRDGINFFRA…EQGVYKGTEG (117 aa)). H123 and Y127 together coordinate heme.

The protein belongs to the CcmE/CycJ family.

It localises to the cell inner membrane. Heme chaperone required for the biogenesis of c-type cytochromes. Transiently binds heme delivered by CcmC and transfers the heme to apo-cytochromes in a process facilitated by CcmF and CcmH. The sequence is that of Cytochrome c-type biogenesis protein CcmE from Roseobacter denitrificans (strain ATCC 33942 / OCh 114) (Erythrobacter sp. (strain OCh 114)).